The sequence spans 984 residues: Putative formate dehydrogenase SAV2309 (984 aa).

Positions 3–79 (EHLVVTLDGK…PMTVNTVNND (77 aa)) constitute a 2Fe-2S ferredoxin-type domain. [2Fe-2S] cluster-binding residues include Cys37, Cys48, Cys51, and Cys63. The 4Fe-4S His(Cys)3-ligated-type domain maps to 79-119 (DVKDAQKEALDRILEKHMLYCTVCDYNNGDCEIHNTMDAWG). His95, Cys99, Cys102, Cys109, Cys147, Cys150, Cys153, Cys157, Cys190, Cys193, Cys196, Cys200, Cys264, Cys267, Cys271, and Cys299 together coordinate [4Fe-4S] cluster. 2 4Fe-4S ferredoxin-type domains span residues 138–165 (PFYR…VNET) and 181–211 (NDVP…VNME). The segment at 252–984 (MRKERIKKTK…YVFPGNQVDK (733 aa)) is formate dehydrogenase. Residues 257 to 313 (IKKTKTVCTYCGVGCSFEVWTKDREILKVQPSHDSPANKIVTCVKGKFSWGHINSDQ) enclose the 4Fe-4S Mo/W bis-MGD-type domain.

The protein in the C-terminal section; belongs to the prokaryotic molybdopterin-containing oxidoreductase family. Requires [2Fe-2S] cluster as cofactor. [4Fe-4S] cluster serves as cofactor. Mo-bis(molybdopterin guanine dinucleotide) is required as a cofactor.

The enzyme catalyses formate + NAD(+) = CO2 + NADH. This Staphylococcus aureus (strain Mu50 / ATCC 700699) protein is Putative formate dehydrogenase SAV2309.